Consider the following 49-residue polypeptide: Large ribosomal subunit protein bL33 (49 aa).

This sequence belongs to the bacterial ribosomal protein bL33 family.

This Alkaliphilus metalliredigens (strain QYMF) protein is Large ribosomal subunit protein bL33.